Consider the following 250-residue polypeptide: Dihydroorotate dehydrogenase B (NAD(+)), electron transfer subunit (250 aa).

Residues 1 to 94 (MKVVAQEEIA…MGPQGNGFDL (94 aa)) enclose the FAD-binding FR-type domain. Residues 45–48 (RPIS), 62–64 (IYR), and 69–70 (GT) each bind FAD. [2Fe-2S] cluster contacts are provided by cysteine 214, cysteine 219, cysteine 222, and cysteine 237.

This sequence belongs to the PyrK family. Heterotetramer of 2 PyrK and 2 PyrD type B subunits. It depends on [2Fe-2S] cluster as a cofactor. FAD serves as cofactor.

It participates in pyrimidine metabolism; UMP biosynthesis via de novo pathway; orotate from (S)-dihydroorotate (NAD(+) route): step 1/1. Responsible for channeling the electrons from the oxidation of dihydroorotate from the FMN redox center in the PyrD type B subunit to the ultimate electron acceptor NAD(+). The polypeptide is Dihydroorotate dehydrogenase B (NAD(+)), electron transfer subunit (Streptococcus pneumoniae serotype 4 (strain ATCC BAA-334 / TIGR4)).